We begin with the raw amino-acid sequence, 433 residues long: Chaperone SurA (433 aa).

The N-terminal stretch at 1 to 28 (MTAITRITLTGALLAAALLLAALQPARA) is a signal peptide. 2 PpiC domains span residues 174–277 (NQEY…KLMD) and 286–386 (VTET…QVTD).

The protein localises to the periplasm. It carries out the reaction [protein]-peptidylproline (omega=180) = [protein]-peptidylproline (omega=0). Chaperone involved in the correct folding and assembly of outer membrane proteins. Recognizes specific patterns of aromatic residues and the orientation of their side chains, which are found more frequently in integral outer membrane proteins. May act in both early periplasmic and late outer membrane-associated steps of protein maturation. This Alkalilimnicola ehrlichii (strain ATCC BAA-1101 / DSM 17681 / MLHE-1) protein is Chaperone SurA.